A 1071-amino-acid chain; its full sequence is DNA-directed RNA polymerase subunit beta (1071 aa).

The protein belongs to the RNA polymerase beta chain family. As to quaternary structure, in plastids the minimal PEP RNA polymerase catalytic core is composed of four subunits: alpha, beta, beta', and beta''. When a (nuclear-encoded) sigma factor is associated with the core the holoenzyme is formed, which can initiate transcription.

It localises to the plastid. It is found in the chloroplast. It carries out the reaction RNA(n) + a ribonucleoside 5'-triphosphate = RNA(n+1) + diphosphate. DNA-dependent RNA polymerase catalyzes the transcription of DNA into RNA using the four ribonucleoside triphosphates as substrates. The polypeptide is DNA-directed RNA polymerase subunit beta (Anthoceros angustus (Hornwort)).